The primary structure comprises 622 residues: Low affinity potassium transport system protein Kup (622 aa).

12 helical membrane passes run L9–L29, V49–L69, V101–P121, P137–I157, V165–V185, A212–Y232, W247–L267, P276–A296, I337–F357, L363–C383, A397–V417, and I419–T439.

It belongs to the HAK/KUP transporter (TC 2.A.72) family.

It localises to the cell inner membrane. The enzyme catalyses K(+)(in) + H(+)(in) = K(+)(out) + H(+)(out). In terms of biological role, responsible for the low-affinity transport of potassium into the cell. Likely operates as a K(+):H(+) symporter. The sequence is that of Low affinity potassium transport system protein Kup from Pectobacterium atrosepticum (strain SCRI 1043 / ATCC BAA-672) (Erwinia carotovora subsp. atroseptica).